The following is a 614-amino-acid chain: Probable peptide-binding protein YejA (614 aa).

An N-terminal signal peptide occupies residues 1 to 27; sequence MILAPLKSRILIALAASALLIPAVASA.

The protein belongs to the bacterial solute-binding protein 5 family. As to quaternary structure, the complex is composed of one ATP-binding protein (YejF), two transmembrane proteins (YejB and YejE) and a solute-binding protein (YejA).

The protein localises to the periplasm. Its function is as follows. Probably part of the ABC transporter complex YejABEF, which is likely involved in broad-spectrum peptide import. This chain is Probable peptide-binding protein YejA, found in Agrobacterium fabrum (strain C58 / ATCC 33970) (Agrobacterium tumefaciens (strain C58)).